Here is a 240-residue protein sequence, read N- to C-terminus: Purine nucleoside phosphorylase DeoD-type (240 aa).

His5 contributes to the a purine D-ribonucleoside binding site. Residues Gly21, Arg25, Arg44, and 88-91 (RVGS) contribute to the phosphate site. Residues 181–183 (EME) and 205–206 (SD) contribute to the a purine D-ribonucleoside site. Asp206 serves as the catalytic Proton donor.

This sequence belongs to the PNP/UDP phosphorylase family. As to quaternary structure, homohexamer; trimer of homodimers.

The enzyme catalyses a purine D-ribonucleoside + phosphate = a purine nucleobase + alpha-D-ribose 1-phosphate. It carries out the reaction a purine 2'-deoxy-D-ribonucleoside + phosphate = a purine nucleobase + 2-deoxy-alpha-D-ribose 1-phosphate. Functionally, catalyzes the reversible phosphorolytic breakdown of the N-glycosidic bond in the beta-(deoxy)ribonucleoside molecules, with the formation of the corresponding free purine bases and pentose-1-phosphate. The chain is Purine nucleoside phosphorylase DeoD-type from Enterobacter sp. (strain 638).